Here is a 144-residue protein sequence, read N- to C-terminus: Large ribosomal subunit protein uL24 (144 aa).

A disordered region spans residues asparagine 102–asparagine 144. The segment covering isoleucine 103–lysine 134 has biased composition (basic and acidic residues). Positions threonine 135 to asparagine 144 are enriched in acidic residues.

Belongs to the universal ribosomal protein uL24 family. As to quaternary structure, part of the 50S ribosomal subunit.

Its function is as follows. One of two assembly initiator proteins, it binds directly to the 5'-end of the 23S rRNA, where it nucleates assembly of the 50S subunit. Functionally, located at the polypeptide exit tunnel on the outside of the subunit. The chain is Large ribosomal subunit protein uL24 (rpl24) from Thermoplasma acidophilum (strain ATCC 25905 / DSM 1728 / JCM 9062 / NBRC 15155 / AMRC-C165).